We begin with the raw amino-acid sequence, 89 residues long: Large ribosomal subunit protein eL34 (89 aa).

Residues 1–22 (MPAPRYKSGSSKKVYRKAPGNS) form a disordered region.

It belongs to the eukaryotic ribosomal protein eL34 family.

This Methanococcus maripaludis (strain DSM 14266 / JCM 13030 / NBRC 101832 / S2 / LL) protein is Large ribosomal subunit protein eL34.